Here is a 933-residue protein sequence, read N- to C-terminus: uncharacterized protein (933 aa).

Residues 1-28 are compositionally biased toward polar residues; that stretch reads MNGNLPHIQIQSPKNSLDHLNNGRQATH. Disordered stretches follow at residues 1-135, 173-194, and 252-275; these read MNGN…GESD, MDNESSEEERDGIPRVEGNAAD, and ATDFPNLAHESSEPSSSRHTADAQ. The segment covering 29–47 has biased composition (basic and acidic residues); sequence NFEHGKPGDREEANGHADA. Positions 49-59 are enriched in low complexity; that stretch reads SSSGRSRYLSS. Polar residues-rich tracts occupy residues 87–101 and 108–135; these read TLSFLNPSRASSNTH and NRSSNVTRTVSGRKSNHGSSLTDTGESD. Positions 173–182 are enriched in acidic residues; it reads MDNESSEEER. The segment covering 264-275 has biased composition (polar residues); that stretch reads EPSSSRHTADAQ. WD repeat units follow at residues 314-353, 385-423, 425-465, 467-506, 517-563, 568-607, 617-657, and 665-710; these read SSNNAIWAMKFSRDGRYLAVGGQDRILRIWAVLDSEHARS, GHTADILDLSWSRNNFLLSSSMDKTARLWHPVRKDCLCC, EHSD…VSFW, ELPELITAVAFSPDGGLAIAGTFVGLCLFYDTRGLRFRTQ, AKGS…LELK, ANAQSQNRAYFDDDGNYVICGSEDHQVFIWDLPPQHMHKT, ASVR…SVIS, and PSLR…AARK. Ser-722 bears the Phosphoserine mark. The interval 756 to 796 is disordered; sequence NASQITNNENNGNDDIKKGDEPEEEHVGLRKNSTQEKNANL. A compositionally biased stretch (polar residues) spans 757–768; sequence ASQITNNENNGN. The segment covering 769-783 has biased composition (basic and acidic residues); sequence DDIKKGDEPEEEHVG.

Its subcellular location is the endoplasmic reticulum. It is found in the nucleus. This is an uncharacterized protein from Schizosaccharomyces pombe (strain 972 / ATCC 24843) (Fission yeast).